The primary structure comprises 541 residues: Atlastin-3 (541 aa).

The segment at 1–25 (MLSPQRVAAAASRGADDAMESSKPG) is N-terminal hypervariable region (HVR). Over 1 to 445 (MLSPQRVAAA…NVFSTFRTPA (445 aa)) the chain is Cytoplasmic. In terms of domain architecture, GB1/RHD3-type G spans 57–305 (DLDVVVVSVA…LIPYVLNPSK (249 aa)). R70, K71, G72, K73, S74, F75, and R109 together coordinate GDP. D142 contributes to the Mg(2+) binding site. GDP is bound by residues R213, D214, V272, and S275. A 3HB (three-helix bundle) domain region spans residues 343-434 (MLQATAEANN…YENFCKHNGS (92 aa)). Residue K391 is modified to N6-acetyllysine. Residues 446 to 466 (VLFTGIVALYIASGLTGFIGL) form a helical membrane-spanning segment. A topological domain (lumenal) is located at residue E467. The chain crosses the membrane as a helical span at residues 468–488 (VVAQLFNCMVGLLLIALLTWG). The Cytoplasmic segment spans residues 489-541 (YIRYSGQYRELGGAIDFGAAYVLEQASSHIGNSTQATVRDAVVGRPSMDKKAQ). At S535 the chain carries Phosphoserine.

It belongs to the TRAFAC class dynamin-like GTPase superfamily. GB1/RHD3 GTPase family. GB1 subfamily. In terms of assembly, monomeric and homodimeric. The homodimer, transiently formed by two molecules on opposing membranes, is the active form mediating ER membrane fusion. Interacts with ZFYVE27; both proteins are involved in endoplasmic reticulum tubular network organization. Interacts with REEP5; both proteins are involved in endoplasmic reticulum tubular network organization. Expressed in the central nervous system and in dorsal root ganglia neurons. Expressed in peripheral tissues (at protein level).

It is found in the endoplasmic reticulum membrane. The enzyme catalyses GTP + H2O = GDP + phosphate + H(+). Its function is as follows. Atlastin-3 (ATL3) is a membrane-anchored GTPase that mediates the GTP-dependent fusion of endoplasmic reticulum (ER) membranes, maintaining the continuous ER network. It facilitates the formation of three-way junctions where ER tubules intersect. Two atlastin-3 on neighboring ER tubules bind GTP and form loose homodimers through the GB1/RHD3-type G domains and 3HB regions. Upon GTP hydrolysis, the 3HB regions tighten, pulling the membranes together to drive their fusion. After fusion, the homodimer disassembles upon release of inorganic phosphate (Pi). Subsequently, GDP dissociates, resetting the monomers to a conformation ready for a new fusion cycle. In Homo sapiens (Human), this protein is Atlastin-3.